Consider the following 46-residue polypeptide: Protein PsbN (46 aa).

Residues 10-30 (VAIAVLAALLGLTGFGVYTAF) form a helical membrane-spanning segment.

The protein belongs to the PsbN family.

Its subcellular location is the cellular thylakoid membrane. Its function is as follows. May play a role in photosystem I and II biogenesis. The polypeptide is Protein PsbN (Synechococcus sp. (strain WH7803)).